Consider the following 494-residue polypeptide: Nicotianamine aminotransferase 1 (494 aa).

Composition is skewed to low complexity over residues 24–38 (SGTS…TSSS) and 48–62 (STAM…AASS). A disordered region spans residues 24–76 (SGTSYPTRTTTTSSSAPEFTNKKQSTAMAPTTAAAAASSNGGGESDGSSKEWR). K322 carries the N6-(pyridoxal phosphate)lysine modification.

Belongs to the class-I pyridoxal-phosphate-dependent aminotransferase family. Pyridoxal 5'-phosphate is required as a cofactor. In terms of tissue distribution, expressed in companion and pericycle cells adjacent to the protoxylem of roots. Expressed in companion cells of shoots.

It catalyses the reaction nicotianamine + 2-oxoglutarate = 3''-deamino-3''-oxonicotianamine + L-glutamate. In terms of biological role, involved in biosynthesis of mugineic acid family phytosiderophores, which are ferric iron chelators produced in graminaceous plants in response to iron deficiency. This chain is Nicotianamine aminotransferase 1, found in Oryza sativa subsp. japonica (Rice).